A 301-amino-acid polypeptide reads, in one-letter code: Acetaldehyde dehydrogenase (301 aa).

The active-site Acyl-thioester intermediate is cysteine 130. Residues 161-169 (SVGPGTRRN) and asparagine 272 contribute to the NAD(+) site.

This sequence belongs to the acetaldehyde dehydrogenase family.

The catalysed reaction is acetaldehyde + NAD(+) + CoA = acetyl-CoA + NADH + H(+). The sequence is that of Acetaldehyde dehydrogenase (mhpF) from Cupriavidus taiwanensis (strain DSM 17343 / BCRC 17206 / CCUG 44338 / CIP 107171 / LMG 19424 / R1) (Ralstonia taiwanensis (strain LMG 19424)).